Here is a 481-residue protein sequence, read N- to C-terminus: Halobacterial transducer protein 9 (481 aa).

Residues 10–81 (SPFTVPLLLN…NKVADTPIDA (72 aa)) form the PAS domain. The Methyl-accepting transducer domain occupies 208 to 444 (DVERLEAASQ…EIAAMVDETA (237 aa)).

The protein belongs to the methyl-accepting chemotaxis (MCP) protein family.

It localises to the cytoplasm. Its function is as follows. Potentially involved in chemo- or phototactic signal transduction. This chain is Halobacterial transducer protein 9 (htr9), found in Halobacterium salinarum (strain ATCC 700922 / JCM 11081 / NRC-1) (Halobacterium halobium).